A 469-amino-acid chain; its full sequence is ATP sulfurylase 4, chloroplastic (469 aa).

The N-terminal 51 residues, 1 to 51, are a transit peptide targeting the chloroplast; sequence MASSAAAIVSGSPFRSSPLIHNHHASRYAPGSISVVSLPRQVSRRGLSVKS.

This sequence belongs to the sulfate adenylyltransferase family. In terms of assembly, homotetramer. As to expression, expressed in roots and leaves.

The protein resides in the plastid. The protein localises to the chloroplast stroma. The enzyme catalyses sulfate + ATP + H(+) = adenosine 5'-phosphosulfate + diphosphate. Its pathway is sulfur metabolism; hydrogen sulfide biosynthesis; sulfite from sulfate: step 1/3. Sulfate adenylyltransferase. Catalyzes the first step of the sulfate assimilation pathway. The chain is ATP sulfurylase 4, chloroplastic (APS4) from Arabidopsis thaliana (Mouse-ear cress).